The chain runs to 333 residues: Cytochrome f (333 aa).

Positions 1 to 44 are cleaved as a signal peptide; sequence MRNACTRARLTRTARAMVKTLFIAIASVTFFFTSDLALPQSAAA. The heme site is built by tyrosine 45, cysteine 66, cysteine 69, and histidine 70. The chain crosses the membrane as a helical span at residues 299-318; it reads VGWLIAFVALVMLAQVMLVL.

Belongs to the cytochrome f family. As to quaternary structure, the 4 large subunits of the cytochrome b6-f complex are cytochrome b6, subunit IV (17 kDa polypeptide, PetD), cytochrome f and the Rieske protein, while the 4 small subunits are PetG, PetL, PetM and PetN. The complex functions as a dimer. Requires heme as cofactor.

It is found in the cellular thylakoid membrane. Functionally, component of the cytochrome b6-f complex, which mediates electron transfer between photosystem II (PSII) and photosystem I (PSI), cyclic electron flow around PSI, and state transitions. The protein is Cytochrome f of Trichormus variabilis (strain ATCC 29413 / PCC 7937) (Anabaena variabilis).